The following is a 73-amino-acid chain: RNA-binding protein Hfq (73 aa).

One can recognise a Sm domain in the interval 8–68; the sequence is DQFLNQIRKE…ISTFAPQKNV (61 aa).

Belongs to the Hfq family. As to quaternary structure, homohexamer.

In terms of biological role, RNA chaperone that binds small regulatory RNA (sRNAs) and mRNAs to facilitate mRNA translational regulation in response to envelope stress, environmental stress and changes in metabolite concentrations. Also binds with high specificity to tRNAs. The polypeptide is RNA-binding protein Hfq (Bacillus subtilis (strain 168)).